We begin with the raw amino-acid sequence, 275 residues long: tRNA uridine(34) hydroxylase (275 aa).

The 97-residue stretch at 122 to 218 folds into the Rhodanese domain; sequence SRSDVYTIDT…YFKSTQNKNS (97 aa). Cys178 (cysteine persulfide intermediate) is an active-site residue.

It belongs to the TrhO family.

The catalysed reaction is uridine(34) in tRNA + AH2 + O2 = 5-hydroxyuridine(34) in tRNA + A + H2O. In terms of biological role, catalyzes oxygen-dependent 5-hydroxyuridine (ho5U) modification at position 34 in tRNAs. This Ehrlichia chaffeensis (strain ATCC CRL-10679 / Arkansas) protein is tRNA uridine(34) hydroxylase.